The following is a 217-amino-acid chain: Ribosome maturation factor RimM (217 aa).

A PRC barrel domain is found at 115 to 186; the sequence is EDAWYDNQLV…TVTLTPPPGL (72 aa). The disordered stretch occupies residues 181-217; sequence TPPPGLFEDLPDDAPAAGDESEPVSPPVTAEETPGGE.

The protein belongs to the RimM family. In terms of assembly, binds ribosomal protein uS19.

It localises to the cytoplasm. Functionally, an accessory protein needed during the final step in the assembly of 30S ribosomal subunit, possibly for assembly of the head region. Essential for efficient processing of 16S rRNA. May be needed both before and after RbfA during the maturation of 16S rRNA. It has affinity for free ribosomal 30S subunits but not for 70S ribosomes. The protein is Ribosome maturation factor RimM of Leifsonia xyli subsp. xyli (strain CTCB07).